A 237-amino-acid chain; its full sequence is Ribonuclease PH (237 aa).

Residues Arg-86 and 124 to 126 (GTR) each bind phosphate.

Belongs to the RNase PH family. Homohexameric ring arranged as a trimer of dimers.

The catalysed reaction is tRNA(n+1) + phosphate = tRNA(n) + a ribonucleoside 5'-diphosphate. Functionally, phosphorolytic 3'-5' exoribonuclease that plays an important role in tRNA 3'-end maturation. Removes nucleotide residues following the 3'-CCA terminus of tRNAs; can also add nucleotides to the ends of RNA molecules by using nucleoside diphosphates as substrates, but this may not be physiologically important. Probably plays a role in initiation of 16S rRNA degradation (leading to ribosome degradation) during starvation. The sequence is that of Ribonuclease PH from Idiomarina loihiensis (strain ATCC BAA-735 / DSM 15497 / L2-TR).